Here is a 364-residue protein sequence, read N- to C-terminus: MNRATATINVTALKHNLSQIKALAPKSLAWVMIKSNGYGHGLVRVAKALSDANAFGVACIDEALTLREVGIKSPIIVMKGFYNEAELSQFARHRLGAVIHCSDQVSLLEKTNLTSSLSVWLKIDTGMNRLGFSVEQSPAVYNQLKTSSSIQKPIGLMTHLADADNENKTFTELQIKRFFSVTEKMIGPKSIVNSAGFFAYPNALVDWIRPGIILYGISPFGINYNSFKEKIEKKFRPVMTLSAKIIAIKNRRQNDSVGYGCTWSCPEDMPIAIVSIGYGDGYPRHAPSGTPVLLNGKICPLIGRVSMDMIAIDLRSQPNAQVGDDVILWGEGLPVEIIAEKAGTIAYELLCKITQRVQFIEIEK.

K34 acts as the Proton acceptor; specific for D-alanine in catalysis. At K34 the chain carries N6-(pyridoxal phosphate)lysine. R129 is a substrate binding site. Y259 acts as the Proton acceptor; specific for L-alanine in catalysis. M307 is a substrate binding site.

It belongs to the alanine racemase family. The cofactor is pyridoxal 5'-phosphate.

It catalyses the reaction L-alanine = D-alanine. It participates in amino-acid biosynthesis; D-alanine biosynthesis; D-alanine from L-alanine: step 1/1. In terms of biological role, catalyzes the interconversion of L-alanine and D-alanine. May also act on other amino acids. The polypeptide is Alanine racemase (alr) (Coxiella burnetii (strain Dugway 5J108-111)).